The sequence spans 220 residues: Octanoyltransferase (220 aa).

In terms of domain architecture, BPL/LPL catalytic spans 31–217; the sequence is ENTPDEIWLV…HFAEILGYNA (187 aa). Substrate contacts are provided by residues 70 to 77, 146 to 148, and 159 to 161; these read RGGQITYH, SLG, and GLA. C177 functions as the Acyl-thioester intermediate in the catalytic mechanism.

This sequence belongs to the LipB family.

It localises to the cytoplasm. It catalyses the reaction octanoyl-[ACP] + L-lysyl-[protein] = N(6)-octanoyl-L-lysyl-[protein] + holo-[ACP] + H(+). It participates in protein modification; protein lipoylation via endogenous pathway; protein N(6)-(lipoyl)lysine from octanoyl-[acyl-carrier-protein]: step 1/2. Catalyzes the transfer of endogenously produced octanoic acid from octanoyl-acyl-carrier-protein onto the lipoyl domains of lipoate-dependent enzymes. Lipoyl-ACP can also act as a substrate although octanoyl-ACP is likely to be the physiological substrate. The polypeptide is Octanoyltransferase (Actinobacillus succinogenes (strain ATCC 55618 / DSM 22257 / CCUG 43843 / 130Z)).